Reading from the N-terminus, the 632-residue chain is tRNA uridine 5-carboxymethylaminomethyl modification enzyme MnmG (632 aa).

FAD-binding positions include 13–18 (GGGHAG), valine 125, and serine 180. 273 to 287 (GPRYCPSIEDKVVRF) is an NAD(+) binding site. Glutamine 370 is a binding site for FAD.

It belongs to the MnmG family. In terms of assembly, homodimer. Heterotetramer of two MnmE and two MnmG subunits. Requires FAD as cofactor.

It localises to the cytoplasm. Functionally, NAD-binding protein involved in the addition of a carboxymethylaminomethyl (cmnm) group at the wobble position (U34) of certain tRNAs, forming tRNA-cmnm(5)s(2)U34. The chain is tRNA uridine 5-carboxymethylaminomethyl modification enzyme MnmG from Nitrosospira multiformis (strain ATCC 25196 / NCIMB 11849 / C 71).